The chain runs to 286 residues: CLA biosynthesis dehydrogenase/reductase (286 aa).

NAD(+)-binding residues include Asp-37, Asp-63, Val-64, Asn-90, Tyr-156, and Lys-160. The active-site Proton acceptor is Tyr-156.

Belongs to the short-chain dehydrogenases/reductases (SDR) family.

It is found in the cytoplasm. It carries out the reaction (10S)-hydroxy-(12Z)-octadecenoate + NAD(+) = 10-oxo-(12Z)-octadecenoate + NADH + H(+). The enzyme catalyses 10-oxo-(11E)-octadecenoate + NADH + H(+) = 10-hydroxy-(11E)-octadecenoate + NAD(+). The catalysed reaction is 10-oxooctadecanoate + NADH + H(+) = 10-hydroxyoctadecanoate + NAD(+). It participates in lipid metabolism; fatty acid metabolism. Is involved in a saturation metabolic pathway of polyunsaturated fatty acids, that detoxifies unsaturated fatty acids and generates hydroxy fatty acids, oxo fatty acids, conjugated fatty acids such as conjugated linoleic acids (CLAs), and partially saturated trans-fatty acids as intermediates. CLA-DH catalyzes the dehydrogenation/reduction steps in the production of 10-oxo-(12Z)-octadecenoate, 10-hydroxy-(11E)-octadecenoate and 10-hydroxyoctadecanoate during linoleate metabolism. As part of the gut microbiome, this enzyme modifies host fatty acid composition and is expected to improve human health by altering lipid metabolism related to the onset of metabolic syndrome. The protein is CLA biosynthesis dehydrogenase/reductase of Lactiplantibacillus plantarum (Lactobacillus plantarum).